The chain runs to 630 residues: Polygalacturonase-1 non-catalytic subunit beta (630 aa).

Positions 1 to 27 (MHTKIHLPPCILLLLLFSLPSFNVVVG) are cleaved as a signal peptide. The propeptide occupies 28–108 (GDGESGNPFT…MCAPDLSPSL (81 aa)). Asn-124, Asn-142, Asn-256, Asn-334, Asn-369, and Asn-387 each carry an N-linked (GlcNAc...) asparagine glycan. A propeptide spanning residues 398–630 (EVNGGKKVNN…ENDMTWAIAD (233 aa)) is cleaved from the precursor. In terms of domain architecture, BURP spans 415-629 (FFREKMLKSG…FENDMTWAIA (215 aa)).

As to quaternary structure, interacts with polygalacturonase-2 (isoenzymes PG2A and PG2B) to form heterodimers called polygalacturonase-1 (PG1). As to expression, mostly expressed in fruit pericarp. Also detected at low levels in cell wall of roots, leaves and flowers (at protein level).

It localises to the secreted. It is found in the extracellular space. The protein localises to the apoplast. The protein resides in the cell wall. In terms of biological role, non-catalytic subunit of the polygalacturonase isozyme 1 (PG1). Necessary and sufficient to convert the polygalacturonase from its monomeric form PG2 to its heterodimeric form PG1. Seems to limit the depolymerization and solubilization of cell wall polyuronides mediated by PG2 during ripening, probably by recruiting PG2 to form PG1. This Solanum lycopersicum (Tomato) protein is Polygalacturonase-1 non-catalytic subunit beta (GP1).